The sequence spans 268 residues: Phosphatidylglycerol--prolipoprotein diacylglyceryl transferase (268 aa).

7 helical membrane-spanning segments follow: residues 14–34 (IIFS…LIGF), 60–80 (LLFN…VLFY), 95–115 (VWEG…AMLV), 124–144 (FWVV…MGRI), 176–196 (SQLY…NWFI), 203–223 (GSVA…VEFF), and 238–258 (ISMG…FIVL). Residue Arg-143 coordinates a 1,2-diacyl-sn-glycero-3-phospho-(1'-sn-glycerol).

The protein belongs to the Lgt family.

The protein resides in the cell inner membrane. It catalyses the reaction L-cysteinyl-[prolipoprotein] + a 1,2-diacyl-sn-glycero-3-phospho-(1'-sn-glycerol) = an S-1,2-diacyl-sn-glyceryl-L-cysteinyl-[prolipoprotein] + sn-glycerol 1-phosphate + H(+). It participates in protein modification; lipoprotein biosynthesis (diacylglyceryl transfer). Catalyzes the transfer of the diacylglyceryl group from phosphatidylglycerol to the sulfhydryl group of the N-terminal cysteine of a prolipoprotein, the first step in the formation of mature lipoproteins. In Mannheimia succiniciproducens (strain KCTC 0769BP / MBEL55E), this protein is Phosphatidylglycerol--prolipoprotein diacylglyceryl transferase.